The primary structure comprises 1140 residues: Eukaryotic translation initiation factor 3 subunit A (1140 aa).

Positions 319 to 502 (LQRMAAHVLL…NSIYFGTDLT (184 aa)) constitute a PCI domain. 3 stretches are compositionally biased toward basic and acidic residues: residues 589-624 (QNNA…EERE), 830-900 (AAEE…RGGD), and 921-984 (ERND…EPDS). 2 disordered regions span residues 589–632 (QNNA…QNEI) and 830–1140 (AAEE…VKRR). The span at 987–998 (AAGAKDAGGAPA) shows a compositional bias: low complexity. Basic and acidic residues-rich tracts occupy residues 999 to 1050 (SRDD…EPQR), 1058 to 1086 (DAPR…RGDQ), and 1109 to 1130 (PRDE…KGGD).

The protein belongs to the eIF-3 subunit A family. As to quaternary structure, component of the eukaryotic translation initiation factor 3 (eIF-3) complex. The eIF-3 complex interacts with pix.

Its subcellular location is the cytoplasm. RNA-binding component of the eukaryotic translation initiation factor 3 (eIF-3) complex, which is involved in protein synthesis of a specialized repertoire of mRNAs and, together with other initiation factors, stimulates binding of mRNA and methionyl-tRNAi to the 40S ribosome. The eIF-3 complex specifically targets and initiates translation of a subset of mRNAs involved in cell proliferation. This Drosophila ananassae (Fruit fly) protein is Eukaryotic translation initiation factor 3 subunit A.